The following is a 516-amino-acid chain: Extracellular endo-inulinase inuB (516 aa).

An N-terminal signal peptide occupies residues 1 to 25; sequence MLNPKVAYMVWMTCLGLTLPSQAQS. Residues 40 to 43, Q59, W67, and 99 to 100 each bind substrate; these read WMNE and FT. E43 is an active-site residue. N109 carries N-linked (GlcNAc...) asparagine glycosylation. Residues 175-176 and E233 contribute to the substrate site; that span reads RD. 3 N-linked (GlcNAc...) asparagine glycosylation sites follow: N372, N419, and N424.

The protein belongs to the glycosyl hydrolase 32 family.

The protein localises to the secreted. It carries out the reaction Endohydrolysis of (2-&gt;1)-beta-D-fructosidic linkages in inulin.. Endo-inulinase involved in utilization of the plant storage polymer inulin, consisting of fructooligosaccharides with a degree of polymerization (DP) value from 2 to 60. This Aspergillus niger protein is Extracellular endo-inulinase inuB (inuB).